Consider the following 330-residue polypeptide: Ketol-acid reductoisomerase (NADP(+)) (330 aa).

A KARI N-terminal Rossmann domain is found at 1-181; sequence MKVFYDSDFK…GLSRAGVIQT (181 aa). Residues 24–27, Arg-47, Ser-52, and 82–85 contribute to the NADP(+) site; these read YGSQ and DELQ. His-107 is an active-site residue. Residue Gly-133 coordinates NADP(+). The region spanning 182-327 is the KARI C-terminal knotted domain; that stretch reads TFKEETETDL…AKLRKMCGLE (146 aa). Mg(2+) contacts are provided by Asp-190, Glu-194, Glu-226, and Glu-230. A substrate-binding site is contributed by Ser-251.

It belongs to the ketol-acid reductoisomerase family. The cofactor is Mg(2+).

It catalyses the reaction (2R)-2,3-dihydroxy-3-methylbutanoate + NADP(+) = (2S)-2-acetolactate + NADPH + H(+). The enzyme catalyses (2R,3R)-2,3-dihydroxy-3-methylpentanoate + NADP(+) = (S)-2-ethyl-2-hydroxy-3-oxobutanoate + NADPH + H(+). The protein operates within amino-acid biosynthesis; L-isoleucine biosynthesis; L-isoleucine from 2-oxobutanoate: step 2/4. Its pathway is amino-acid biosynthesis; L-valine biosynthesis; L-valine from pyruvate: step 2/4. Its function is as follows. Involved in the biosynthesis of branched-chain amino acids (BCAA). Catalyzes an alkyl-migration followed by a ketol-acid reduction of (S)-2-acetolactate (S2AL) to yield (R)-2,3-dihydroxy-isovalerate. In the isomerase reaction, S2AL is rearranged via a Mg-dependent methyl migration to produce 3-hydroxy-3-methyl-2-ketobutyrate (HMKB). In the reductase reaction, this 2-ketoacid undergoes a metal-dependent reduction by NADPH to yield (R)-2,3-dihydroxy-isovalerate. The chain is Ketol-acid reductoisomerase (NADP(+)) from Methanococcus maripaludis (strain C5 / ATCC BAA-1333).